The sequence spans 751 residues: Pyridoxal-dependent decarboxylase domain-containing protein 1 (751 aa).

The tract at residues 659 to 751 (QMRKEDSPDS…QEAESVETIR (93 aa)) is disordered. Residues 690–702 (DSISETSSVSQLE) are compositionally biased toward polar residues. Residues 720–729 (PQERPAHILE) show a composition bias toward basic and acidic residues. Positions 742 to 751 (QEAESVETIR) are enriched in acidic residues.

Belongs to the group II decarboxylase family. The cofactor is pyridoxal 5'-phosphate.

In Danio rerio (Zebrafish), this protein is Pyridoxal-dependent decarboxylase domain-containing protein 1 (pdxdc1).